The chain runs to 207 residues: dTTP/UTP pyrophosphatase (207 aa).

Catalysis depends on aspartate 87, which acts as the Proton acceptor.

Belongs to the Maf family. YhdE subfamily. A divalent metal cation is required as a cofactor.

It is found in the cytoplasm. It catalyses the reaction dTTP + H2O = dTMP + diphosphate + H(+). The catalysed reaction is UTP + H2O = UMP + diphosphate + H(+). Functionally, nucleoside triphosphate pyrophosphatase that hydrolyzes dTTP and UTP. May have a dual role in cell division arrest and in preventing the incorporation of modified nucleotides into cellular nucleic acids. The sequence is that of dTTP/UTP pyrophosphatase from Nitrosomonas europaea (strain ATCC 19718 / CIP 103999 / KCTC 2705 / NBRC 14298).